Here is a 328-residue protein sequence, read N- to C-terminus: Naphthalene 1,2-dioxygenase/salicylate 5-hydroxylase systems, ferredoxin--NAD(P)(+), reductase component (328 aa).

In terms of domain architecture, 2Fe-2S ferredoxin-type spans 1–89 (MELVVEPLNL…DCTIEIPESD (89 aa)). [2Fe-2S] cluster contacts are provided by Cys-35, Cys-40, Cys-43, and Cys-73. The region spanning 96–193 (ARIVKGTVTA…SGPLGTAYLR (98 aa)) is the FAD-binding FR-type domain.

This sequence belongs to the bacterial ring-hydroxylating dioxygenase ferredoxin reductase family. In terms of assembly, ferredoxin reductase NagAa belongs to both the salicylate 5-hydroxylase (S5H) and the naphthalene 1,2-dioxygenase (NDO) multicomponent enzyme systems. The NDO multicomponent enzyme system is composed of an electron transfer component and a dioxygenase component (iron sulfur protein (ISP)). The electron transfer component is composed of a ferredoxin reductase (NagAa) and a ferredoxin (NagAb), and the dioxygenase component is formed by a large alpha subunit (NagAc) and a small beta subunit (NagAd). The S5H multicomponent enzyme system is composed of an electron transfer component and a monooxygenase component. The electron transfer component is comprised of a ferredoxin reductase (NagAa) and a ferredoxin (NagAb), and the monooxygenase component is formed by a large subunit (NagG) and a small subunit (NagH). The cofactor is [2Fe-2S] cluster. FAD is required as a cofactor.

It catalyses the reaction 2 reduced [2Fe-2S]-[ferredoxin] + NAD(+) + H(+) = 2 oxidized [2Fe-2S]-[ferredoxin] + NADH. It carries out the reaction 2 reduced [2Fe-2S]-[ferredoxin] + NADP(+) + H(+) = 2 oxidized [2Fe-2S]-[ferredoxin] + NADPH. Its pathway is aromatic compound metabolism; naphthalene degradation. In terms of biological role, component of two multicomponent enzyme systems which are involved in the catabolism of naphthalene. Plays a role as an electron transfer component for both salicylate 5-hydroxylase (S5H) and naphthalene 1,2-dioxygenase (NDO) systems, by transferring electrons from NAD(P)H to the oxygenase component via the ferredoxin NagAb. The electron transport chain from the two systems can use both NADH and NADPH as electron donors at approximately similar rates. The polypeptide is Naphthalene 1,2-dioxygenase/salicylate 5-hydroxylase systems, ferredoxin--NAD(P)(+), reductase component (Ralstonia sp).